The chain runs to 358 residues: Plancitoxin-1 (358 aa).

An N-terminal signal peptide occupies residues 1–26 (MPSSVIMFTFLALTVLTAVMVGTSEA). N-linked (GlcNAc...) asparagine glycosylation is present at Asn274. His303 is a catalytic residue.

It belongs to the DNase II family. As to quaternary structure, plancitoxin is a heterodimer of alpha and beta subunits; disulfide-linked by a single disulfide bond. As to expression, venom gland.

Its subcellular location is the secreted. The enzyme catalyses Endonucleolytic cleavage to nucleoside 3'-phosphates and 3'-phosphooligonucleotide end-products.. Hydrolyzes DNA with an optimum pH of 7.2. Is potently hepatotoxic. It induces caspase-independent apoptosis (on rat liver cells) through the following procedure: binding to a specific receptor in the cytoplasmic membrane, entering the cell, entering the nucleus and degrading DNA. This chain is Plancitoxin-1, found in Acanthaster planci (Crown-of-thorns starfish).